Consider the following 274-residue polypeptide: tRNA-cytidine(32) 2-sulfurtransferase (274 aa).

The short motif at 40-45 is the PP-loop motif element; it reads SGGKDS. [4Fe-4S] cluster contacts are provided by cysteine 115, cysteine 118, and cysteine 206.

The protein belongs to the TtcA family. As to quaternary structure, homodimer. Mg(2+) serves as cofactor. [4Fe-4S] cluster is required as a cofactor.

The protein localises to the cytoplasm. It carries out the reaction cytidine(32) in tRNA + S-sulfanyl-L-cysteinyl-[cysteine desulfurase] + AH2 + ATP = 2-thiocytidine(32) in tRNA + L-cysteinyl-[cysteine desulfurase] + A + AMP + diphosphate + H(+). Its pathway is tRNA modification. In terms of biological role, catalyzes the ATP-dependent 2-thiolation of cytidine in position 32 of tRNA, to form 2-thiocytidine (s(2)C32). The sulfur atoms are provided by the cysteine/cysteine desulfurase (IscS) system. This chain is tRNA-cytidine(32) 2-sulfurtransferase, found in Pseudomonas fluorescens (strain Pf0-1).